The chain runs to 393 residues: NAD(P)H-quinone oxidoreductase subunit H, chloroplastic (393 aa).

The protein belongs to the complex I 49 kDa subunit family. NDH is composed of at least 16 different subunits, 5 of which are encoded in the nucleus.

It localises to the plastid. It is found in the chloroplast thylakoid membrane. It catalyses the reaction a plastoquinone + NADH + (n+1) H(+)(in) = a plastoquinol + NAD(+) + n H(+)(out). The catalysed reaction is a plastoquinone + NADPH + (n+1) H(+)(in) = a plastoquinol + NADP(+) + n H(+)(out). Functionally, NDH shuttles electrons from NAD(P)H:plastoquinone, via FMN and iron-sulfur (Fe-S) centers, to quinones in the photosynthetic chain and possibly in a chloroplast respiratory chain. The immediate electron acceptor for the enzyme in this species is believed to be plastoquinone. Couples the redox reaction to proton translocation, and thus conserves the redox energy in a proton gradient. In Lolium perenne (Perennial ryegrass), this protein is NAD(P)H-quinone oxidoreductase subunit H, chloroplastic.